The following is a 244-amino-acid chain: Lactate utilization protein A (244 aa).

The protein belongs to the LutA/YkgE family.

Functionally, is involved in L-lactate degradation and allows cells to grow with lactate as the sole carbon source. In Oceanobacillus iheyensis (strain DSM 14371 / CIP 107618 / JCM 11309 / KCTC 3954 / HTE831), this protein is Lactate utilization protein A.